A 108-amino-acid polypeptide reads, in one-letter code: Replication restart protein PriB (108 aa).

Residues 11-108 form the SSB domain; that stretch reads INRNQVIISG…VLHVRDTRII (98 aa).

It belongs to the PriB family. Homodimer. Interacts with PriA and DnaT. Component of the replication restart primosome. Primosome assembly occurs via a 'hand-off' mechanism. PriA binds to replication forks, subsequently PriB then DnaT bind; DnaT then displaces ssDNA to generate the helicase loading substrate.

Functionally, involved in the restart of stalled replication forks, which reloads the replicative helicase on sites other than the origin of replication; the PriA-PriB pathway is the major replication restart pathway. During primosome assembly it facilitates complex formation between PriA and DnaT on DNA; stabilizes PriA on DNA. Stimulates the DNA unwinding activity of PriA helicase. This is Replication restart protein PriB from Nitrosomonas europaea (strain ATCC 19718 / CIP 103999 / KCTC 2705 / NBRC 14298).